The following is a 440-amino-acid chain: Tumor necrosis factor receptor superfamily member 10B (440 aa).

2 disordered regions span residues 1-32 and 60-84; these read MEQR…RPGP and DLAP…CPPG. An N-terminal signal peptide occupies residues 1 to 55; that stretch reads MEQRGQNAPAASGARKRHGPGPREARGARPGPRVPKTLVLVVAAVLLLVSAESAL. Residues 56-210 are Extracellular-facing; sequence ITQQDLAPQQ…SPGTPASPCS (155 aa). 3 TNFR-Cys repeats span residues 57-94, 97-137, and 138-178; these read TQQD…GRDC, CKYG…NTVC, and QCEE…DIEC. Residues 60 to 71 are compositionally biased toward low complexity; sequence DLAPQQRAAPQQ. Intrachain disulfides connect Cys-81-Cys-94, Cys-97-Cys-113, Cys-116-Cys-129, Cys-119-Cys-137, Cys-139-Cys-153, Cys-156-Cys-170, and Cys-160-Cys-178. The TAPE repeat unit spans residues 192–206; sequence PAVEETVTSSPGTPA. Residues 211-231 form a helical membrane-spanning segment; it reads LSGIIIGVTVAAVVLIVAVFV. Residues 232-440 lie on the Cytoplasmic side of the membrane; that stretch reads CKSLLWKKVL…LEGNADSAMS (209 aa). Residues 339 to 422 enclose the Death domain; sequence RQCFDDFADL…LAKQKIEDHL (84 aa).

Monomer. Can interact with TRADD and RIPK1. Interacts with HCMV protein UL141; this interaction prevents TNFRSF10B cell surface expression. Two TNFRSF10B monomers interact with a UL141 homodimer. Three TNFRSF10B molecules interact with TNFSF10 homotrimer. In the absence of stimulation, interacts with BIRC2, DDX3X and GSK3B. The interaction with BIRC2 and DDX3X is further enhanced upon receptor stimulation and accompanied by DDX3X and BIRC2 cleavage. In terms of processing, (Microbial infection) Glycosylated on Arg residue by S.typhimurium protein Ssek3. In terms of tissue distribution, widely expressed in adult and fetal tissues; very highly expressed in tumor cell lines such as HeLaS3, K-562, HL-60, SW480, A-549 and G-361; highly expressed in heart, peripheral blood lymphocytes, liver, pancreas, spleen, thymus, prostate, ovary, uterus, placenta, testis, esophagus, stomach and throughout the intestinal tract; not detectable in brain.

The protein resides in the membrane. In terms of biological role, receptor for the cytotoxic ligand TNFSF10/TRAIL. The adapter molecule FADD recruits caspase-8 to the activated receptor. The resulting death-inducing signaling complex (DISC) performs caspase-8 proteolytic activation which initiates the subsequent cascade of caspases (aspartate-specific cysteine proteases) mediating apoptosis. Promotes the activation of NF-kappa-B. Essential for ER stress-induced apoptosis. This chain is Tumor necrosis factor receptor superfamily member 10B (TNFRSF10B), found in Homo sapiens (Human).